A 176-amino-acid polypeptide reads, in one-letter code: Large ribosomal subunit protein uL6 (176 aa).

This sequence belongs to the universal ribosomal protein uL6 family. As to quaternary structure, part of the 50S ribosomal subunit.

This protein binds to the 23S rRNA, and is important in its secondary structure. It is located near the subunit interface in the base of the L7/L12 stalk, and near the tRNA binding site of the peptidyltransferase center. In Burkholderia thailandensis (strain ATCC 700388 / DSM 13276 / CCUG 48851 / CIP 106301 / E264), this protein is Large ribosomal subunit protein uL6.